Consider the following 211-residue polypeptide: ATP phosphoribosyltransferase (211 aa).

This sequence belongs to the ATP phosphoribosyltransferase family. Short subfamily. As to quaternary structure, heteromultimer composed of HisG and HisZ subunits.

The protein resides in the cytoplasm. The catalysed reaction is 1-(5-phospho-beta-D-ribosyl)-ATP + diphosphate = 5-phospho-alpha-D-ribose 1-diphosphate + ATP. It functions in the pathway amino-acid biosynthesis; L-histidine biosynthesis; L-histidine from 5-phospho-alpha-D-ribose 1-diphosphate: step 1/9. In terms of biological role, catalyzes the condensation of ATP and 5-phosphoribose 1-diphosphate to form N'-(5'-phosphoribosyl)-ATP (PR-ATP). Has a crucial role in the pathway because the rate of histidine biosynthesis seems to be controlled primarily by regulation of HisG enzymatic activity. This Pseudomonas savastanoi pv. phaseolicola (strain 1448A / Race 6) (Pseudomonas syringae pv. phaseolicola (strain 1448A / Race 6)) protein is ATP phosphoribosyltransferase.